Here is a 445-residue protein sequence, read N- to C-terminus: Exodeoxyribonuclease 7 large subunit (445 aa).

It belongs to the XseA family. In terms of assembly, heterooligomer composed of large and small subunits.

It localises to the cytoplasm. It carries out the reaction Exonucleolytic cleavage in either 5'- to 3'- or 3'- to 5'-direction to yield nucleoside 5'-phosphates.. Bidirectionally degrades single-stranded DNA into large acid-insoluble oligonucleotides, which are then degraded further into small acid-soluble oligonucleotides. This is Exodeoxyribonuclease 7 large subunit from Xanthomonas axonopodis pv. citri (strain 306).